The sequence spans 450 residues: Bifunctional apoptosis regulator (450 aa).

The segment covering 1 to 20 (MEEPQKNDLSMREQEEEHPV) has biased composition (basic and acidic residues). Residues 1-25 (MEEPQKNDLSMREQEEEHPVRSSGP) form a disordered region. The Cytoplasmic segment spans residues 1–140 (MEEPQKNDLS…PSTGRVNPQR (140 aa)). Residues 34–74 (CHCCYDTLVNPTTLNCGHSFCRHCLALWWMSSKKTECPECR) form an RING-type zinc finger. The chain crosses the membrane as a helical span at residues 141 to 161 (GGGFFSGVLTALTGVAVILLV). The Extracellular segment spans residues 162 to 331 (YHWRSRESEH…REPTWKQWRE (170 aa)). Residues 182–249 (WTMEEVVLWL…LTELERVRAL (68 aa)) enclose the SAM domain. N-linked (GlcNAc...) asparagine glycans are attached at residues Asn-232 and Asn-308. A helical transmembrane segment spans residues 332-352 (FLVKYSFLPYQLIAEFAWDWL). At 353–360 (EVHYWTSR) the chain is on the cytoplasmic side. The helical transmembrane segment at 361 to 381 (FLIVNAVLLSVLELFSFWRIW) threads the bilayer. The Extracellular portion of the chain corresponds to 382–404 (SRSELKTVPQRMWSHFWKVSTQG). Residues 405–425 (LFMAMFWPLIPQFVCNCLFYW) traverse the membrane as a helical segment. The Cytoplasmic segment spans residues 426-450 (ALYFNPIINIDLVVKEVRRLETQVL).

As to quaternary structure, interacts with CASP8, BCL2 and BCL2L1 through SAM domain and also with HIP1, IFT57, ESRRBL1 and BCAP31. Interacts with NGFR; this interaction inhibits NF-kappa-B and JNK-related signaling pathways. Mediates RING-dependent self-ubiquitination leading to proteasomal degradation.

The protein localises to the endoplasmic reticulum membrane. It carries out the reaction S-ubiquitinyl-[E2 ubiquitin-conjugating enzyme]-L-cysteine + [acceptor protein]-L-lysine = [E2 ubiquitin-conjugating enzyme]-L-cysteine + N(6)-ubiquitinyl-[acceptor protein]-L-lysine.. In terms of biological role, membrane-bound E3 ubiquitin ligase that plays a role in several processes including apoptosis regulation or reticulum endoplasmic stress. Has anti-apoptotic activity, both for apoptosis triggered via death-receptors and via mitochondrial factors. Contributes to the dynamic control of IRE1/ERN1 signaling during ER stress by inducing BAX inhibitor 1/TMBIM6 proteasomal degradation. Promotes the activation of TGF-beta signaling by mediating the 'Lys-63'-linked ubiquitination of TGFBR1 which is critical to activate the pathway. Together with NGFR, negatively regulates NF-kappa-B and JNK-related signaling pathways. Promotes the proteasome-mediated degradation of PNPLA3, a protein involveld in lipid metabolism. The chain is Bifunctional apoptosis regulator (Bfar) from Mus musculus (Mouse).